Reading from the N-terminus, the 418-residue chain is Light-independent protochlorophyllide reductase subunit N (418 aa).

Residues Cys-17, Cys-42, and Cys-103 each coordinate [4Fe-4S] cluster.

Belongs to the BchN/ChlN family. In terms of assembly, protochlorophyllide reductase is composed of three subunits; ChlL, ChlN and ChlB. Forms a heterotetramer of two ChlB and two ChlN subunits. Requires [4Fe-4S] cluster as cofactor.

It carries out the reaction chlorophyllide a + oxidized 2[4Fe-4S]-[ferredoxin] + 2 ADP + 2 phosphate = protochlorophyllide a + reduced 2[4Fe-4S]-[ferredoxin] + 2 ATP + 2 H2O. It participates in porphyrin-containing compound metabolism; chlorophyll biosynthesis (light-independent). In terms of biological role, component of the dark-operative protochlorophyllide reductase (DPOR) that uses Mg-ATP and reduced ferredoxin to reduce ring D of protochlorophyllide (Pchlide) to form chlorophyllide a (Chlide). This reaction is light-independent. The NB-protein (ChlN-ChlB) is the catalytic component of the complex. In Prochlorococcus marinus (strain SARG / CCMP1375 / SS120), this protein is Light-independent protochlorophyllide reductase subunit N.